Here is a 313-residue protein sequence, read N- to C-terminus: Serine/threonine-protein phosphatase PP2A-3 catalytic subunit (313 aa).

The Mn(2+) site is built by Asp61, His63, Asp89, and Asn121. His122 functions as the Proton donor in the catalytic mechanism. Mn(2+) contacts are provided by His171 and His245. Residue Leu313 is modified to Leucine methyl ester.

Belongs to the PPP phosphatase family. PP-2A subfamily. PP2A consists of a common heterodimeric core enzyme, composed of a 36 kDa catalytic subunit (subunit C) and a 65 kDa constant regulatory subunit (subunit A), that associates with a variety of regulatory subunits such as subunits B (the R2/B/PR55/B55, R3/B''/PR72/PR130/PR59 and R5/B'/B56 families). Interacts with ACR4. Interacts with TAP46. Interacts with SIC/RON3. Requires Mn(2+) as cofactor. Post-translationally, reversibly methyl esterified on Leu-313 by leucine carboxyl methyltransferase 1 (LCMT1) and pectin methylesterase 1 (PME1). Carboxyl methylation influences the affinity of the catalytic subunit for the different regulatory subunits, thereby modulating the PP2A holoenzyme's substrate specificity, enzyme activity and cellular localization. Phosphorylation of either threonine (by autophosphorylation-activated protein kinase) or tyrosine results in inactivation of the phosphatase. Auto-dephosphorylation has been suggested as a mechanism for reactivation.

The protein localises to the cytoplasm. It catalyses the reaction O-phospho-L-seryl-[protein] + H2O = L-seryl-[protein] + phosphate. The enzyme catalyses O-phospho-L-threonyl-[protein] + H2O = L-threonyl-[protein] + phosphate. Functionally, functions redundantly with PP2A4, and is involved in establishing auxin gradients, apical-basal axis of polarity and root and shoot apical meristem during embryogenesis. May dephosphorylate PIN1 and regulate its subcellular distribution for polar auxin transport. Involved in the regulation of formative cell division in roots by dephosphorylating ACR4 protein kinase. This chain is Serine/threonine-protein phosphatase PP2A-3 catalytic subunit, found in Arabidopsis thaliana (Mouse-ear cress).